The following is a 462-amino-acid chain: MRLLDSVTKEKIKLDKKDISIYLCGPTVYDDAHLGHARSSVCFDLLRRVLLAQGNRVKFARNYTDIDDKILKKMAQSGQTLEEITEFYIKSYEEDMRVLNVLDPDFKPRATHYITAMLDLIKKLAKDGFVYTLEDGIYFDTSKDEKYLSLSNRNLEENISRLSNEVQKRNESDFVLWKFDENFYESEFGKGRPGWHTECVAMIDSIFENTLDIHAGGIDLLFPHHENEAAQCRCGCKRKLANIWLHNGFVKIDGEKMSKSLNNSFFIKDALKEFMGEALRFYLLSSHYRSHFNYSLSDLENAKKRLDKFYRLKKRLDLGEISDFDVLNDIGIKSEIAKQILEILNDDLNVSKALALLDDFISSANLELDKESKNKILKQNIKEALSELAKIFGFGFMDATLYFQWGVSKEEREEIEKLILERTEAKKNKDFNTADAIREQLNSKKITLLDTPNGTIWEKINA.

Cys-24 lines the Zn(2+) pocket. Positions 26 to 36 match the 'HIGH' region motif; that stretch reads PTVYDDAHLGH. 3 residues coordinate Zn(2+): Cys-199, His-224, and Glu-228. A 'KMSKS' region motif is present at residues 256 to 260; the sequence is KMSKS. Lys-259 is an ATP binding site.

This sequence belongs to the class-I aminoacyl-tRNA synthetase family. In terms of assembly, monomer. Zn(2+) serves as cofactor.

It is found in the cytoplasm. The enzyme catalyses tRNA(Cys) + L-cysteine + ATP = L-cysteinyl-tRNA(Cys) + AMP + diphosphate. This chain is Cysteine--tRNA ligase (cysS), found in Campylobacter jejuni subsp. jejuni serotype O:2 (strain ATCC 700819 / NCTC 11168).